We begin with the raw amino-acid sequence, 578 residues long: DNA primase (578 aa).

Residues C40–C64 form a CHC2-type zinc finger. Positions K257–P339 constitute a Toprim domain. Positions 263, 307, and 309 each coordinate Mg(2+).

The protein belongs to the DnaG primase family. As to quaternary structure, monomer. Interacts with DnaB. It depends on Zn(2+) as a cofactor. The cofactor is Mg(2+).

The catalysed reaction is ssDNA + n NTP = ssDNA/pppN(pN)n-1 hybrid + (n-1) diphosphate.. Functionally, RNA polymerase that catalyzes the synthesis of short RNA molecules used as primers for DNA polymerase during DNA replication. This Buchnera aphidicola subsp. Baizongia pistaciae (strain Bp) protein is DNA primase.